The following is a 98-amino-acid chain: NADH-ubiquinone oxidoreductase chain 4L (98 aa).

3 helical membrane passes run 1-21 (MTLI…GLLM), 29-49 (ALLC…LTIL), and 61-81 (IILL…LVMV).

This sequence belongs to the complex I subunit 4L family. In terms of assembly, core subunit of respiratory chain NADH dehydrogenase (Complex I) which is composed of 45 different subunits.

The protein localises to the mitochondrion inner membrane. The catalysed reaction is a ubiquinone + NADH + 5 H(+)(in) = a ubiquinol + NAD(+) + 4 H(+)(out). In terms of biological role, core subunit of the mitochondrial membrane respiratory chain NADH dehydrogenase (Complex I) which catalyzes electron transfer from NADH through the respiratory chain, using ubiquinone as an electron acceptor. Part of the enzyme membrane arm which is embedded in the lipid bilayer and involved in proton translocation. This is NADH-ubiquinone oxidoreductase chain 4L (MT-ND4L) from Balaenoptera physalus (Fin whale).